Here is an 89-residue protein sequence, read N- to C-terminus: Small ribosomal subunit protein bS18 (89 aa).

Over residues methionine 1–alanine 15 the composition is skewed to low complexity. Residues methionine 1 to lysine 22 are disordered.

The protein belongs to the bacterial ribosomal protein bS18 family. In terms of assembly, part of the 30S ribosomal subunit. Forms a tight heterodimer with protein bS6.

Its function is as follows. Binds as a heterodimer with protein bS6 to the central domain of the 16S rRNA, where it helps stabilize the platform of the 30S subunit. The chain is Small ribosomal subunit protein bS18 from Caldanaerobacter subterraneus subsp. tengcongensis (strain DSM 15242 / JCM 11007 / NBRC 100824 / MB4) (Thermoanaerobacter tengcongensis).